The chain runs to 769 residues: Neprilysin-21 (769 aa).

The Cytoplasmic portion of the chain corresponds to 1–26 (MKPENGAATWHPAKRSCLGRLTTLET). The helical; Signal-anchor for type II membrane protein transmembrane segment at 27 to 47 (LLLVFLGLLITALLSVLFLWL) threads the bilayer. The Extracellular segment spans residues 48–769 (WVLDGYKTFT…MNPERKCQVW (722 aa)). Residue Asn69 is glycosylated (N-linked (GlcNAc...) asparagine). In terms of domain architecture, Peptidase M13 spans 85-769 (VCTSRECVRL…MNPERKCQVW (685 aa)). 5 cysteine pairs are disulfide-bonded: Cys86–Cys91, Cys109–Cys754, Cys117–Cys714, Cys173–Cys428, and Cys638–Cys766. 7 N-linked (GlcNAc...) asparagine glycosylation sites follow: Asn221, Asn240, Asn272, Asn307, Asn356, Asn412, and Asn506. Position 601 (His601) interacts with Zn(2+). Residue Glu602 is part of the active site. Zn(2+)-binding residues include His605 and Glu663. The active-site Proton donor is the Asp667. N-linked (GlcNAc...) asparagine glycans are attached at residues Asn684 and Asn698.

Belongs to the peptidase M13 family. Zn(2+) serves as cofactor.

It is found in the cell membrane. Functionally, probable cell surface protease. This Caenorhabditis elegans protein is Neprilysin-21 (nep-21).